Consider the following 297-residue polypeptide: Formylmethanofuran--tetrahydromethanopterin formyltransferase (297 aa).

This sequence belongs to the FTR family. As to quaternary structure, homotetramer.

It is found in the cytoplasm. The enzyme catalyses N-formylmethanofuran + 5,6,7,8-tetrahydromethanopterin + H(+) = N(5)-formyl-5,6,7,8-tetrahydromethanopterin + methanofuran. Its pathway is one-carbon metabolism; methanogenesis from CO(2); 5,10-methenyl-5,6,7,8-tetrahydromethanopterin from CO(2): step 2/3. Functionally, catalyzes the reversible transfer of a formyl group from formylmethanofuran (formyl-MFR) to tetrahydromethanopterin (H(4)MPT) to produce 5-formyl tetrahydromethanopterin (5-formyl-H(4)MPT) and methanofuran (MFR). The chain is Formylmethanofuran--tetrahydromethanopterin formyltransferase from Methanothermus fervidus (strain ATCC 43054 / DSM 2088 / JCM 10308 / V24 S).